A 497-amino-acid polypeptide reads, in one-letter code: Cytochrome P450 2D19 (497 aa).

Position 443 (Cys443) interacts with heme.

It belongs to the cytochrome P450 family. Heme is required as a cofactor.

It localises to the endoplasmic reticulum membrane. Its subcellular location is the microsome membrane. It catalyses the reaction an organic molecule + reduced [NADPH--hemoprotein reductase] + O2 = an alcohol + oxidized [NADPH--hemoprotein reductase] + H2O + H(+). Its function is as follows. Responsible for the metabolism of many drugs and environmental chemicals that it oxidizes. This Callithrix jacchus (White-tufted-ear marmoset) protein is Cytochrome P450 2D19 (CYP2D19).